Consider the following 91-residue polypeptide: Small ribosomal subunit protein uS19 (91 aa).

The protein belongs to the universal ribosomal protein uS19 family.

Functionally, protein S19 forms a complex with S13 that binds strongly to the 16S ribosomal RNA. In Metamycoplasma hominis (strain ATCC 23114 / DSM 25592 / NBRC 14850 / NCTC 10111 / PG21) (Mycoplasma hominis), this protein is Small ribosomal subunit protein uS19.